Here is a 296-residue protein sequence, read N- to C-terminus: MRKIKLIAVVGPTAVGKTALGIELAKTFNGEIISGDSQQVYQKLDIGTAKASKEEQEQAYHHLIDVREVNENYSVYDFVKEAKVAIDTIISKGKIPIIVGGTGLYLQSLFEGYHLGGEVNQETLKAYREKLESLSDEDLFEKLTEQSIVIPQVNRRRAIRALELAKFGNDLQNSESPYDVLLIGLNDDRQVLYDRINRRVDLMIDNGLLDEAKWLYDNYPSVQASRGIGYKELFPYFSKQIPLEEAVDKLKQNTRRFAKRQLTWFRNRMNVEFIMVGEENYQQKIKRKVSDFLSSK.

11 to 18 (GPTAVGKT) lines the ATP pocket. Substrate is bound at residue 13-18 (TAVGKT). Residues 36–39 (DSQQ) are interaction with substrate tRNA.

The protein belongs to the IPP transferase family. As to quaternary structure, monomer. It depends on Mg(2+) as a cofactor.

The catalysed reaction is adenosine(37) in tRNA + dimethylallyl diphosphate = N(6)-dimethylallyladenosine(37) in tRNA + diphosphate. Catalyzes the transfer of a dimethylallyl group onto the adenine at position 37 in tRNAs that read codons beginning with uridine, leading to the formation of N6-(dimethylallyl)adenosine (i(6)A). This Streptococcus agalactiae serotype III (strain NEM316) protein is tRNA dimethylallyltransferase.